The following is a 187-amino-acid chain: ATP synthase subunit delta, chloroplastic (187 aa).

The protein belongs to the ATPase delta chain family. F-type ATPases have 2 components, F(1) - the catalytic core - and F(0) - the membrane proton channel. F(1) has five subunits: alpha(3), beta(3), gamma(1), delta(1), epsilon(1). CF(0) has four main subunits: a(1), b(1), b'(1) and c(10-14). The alpha and beta chains form an alternating ring which encloses part of the gamma chain. F(1) is attached to F(0) by a central stalk formed by the gamma and epsilon chains, while a peripheral stalk is formed by the delta, b and b' chains.

Its subcellular location is the plastid. It localises to the chloroplast thylakoid membrane. In terms of biological role, f(1)F(0) ATP synthase produces ATP from ADP in the presence of a proton or sodium gradient. F-type ATPases consist of two structural domains, F(1) containing the extramembraneous catalytic core and F(0) containing the membrane proton channel, linked together by a central stalk and a peripheral stalk. During catalysis, ATP synthesis in the catalytic domain of F(1) is coupled via a rotary mechanism of the central stalk subunits to proton translocation. Functionally, this protein is part of the stalk that links CF(0) to CF(1). It either transmits conformational changes from CF(0) to CF(1) or is implicated in proton conduction. The chain is ATP synthase subunit delta, chloroplastic from Trieres chinensis (Marine centric diatom).